A 445-amino-acid polypeptide reads, in one-letter code: Argininosuccinate synthase (445 aa).

ATP contacts are provided by residues 17–25 and alanine 43; that span reads AFSGGLDTS. Residue tyrosine 99 participates in L-citrulline binding. Residues glycine 129 and threonine 131 each contribute to the ATP site. The L-aspartate site is built by threonine 131, asparagine 135, and aspartate 136. Asparagine 135 is an L-citrulline binding site. Aspartate 136 provides a ligand contact to ATP. Positions 139 and 192 each coordinate L-citrulline. Position 194 (aspartate 194) interacts with ATP. L-citrulline is bound by residues threonine 201, glutamate 203, and glutamate 280.

Belongs to the argininosuccinate synthase family. Type 2 subfamily. Homotetramer.

Its subcellular location is the cytoplasm. The catalysed reaction is L-citrulline + L-aspartate + ATP = 2-(N(omega)-L-arginino)succinate + AMP + diphosphate + H(+). The protein operates within amino-acid biosynthesis; L-arginine biosynthesis; L-arginine from L-ornithine and carbamoyl phosphate: step 2/3. The chain is Argininosuccinate synthase (argG) from Burkholderia multivorans (strain ATCC 17616 / 249).